The chain runs to 276 residues: Shikimate dehydrogenase (NADP(+)) (276 aa).

Shikimate contacts are provided by residues 15–17 and threonine 62; that span reads SKS. Lysine 66 acts as the Proton acceptor in catalysis. Glutamate 78 provides a ligand contact to NADP(+). Residues asparagine 87 and aspartate 103 each coordinate shikimate. Residues 127–131, 150–155, and methionine 214 each bind NADP(+); these read GAGGV and NRTHIK. Residue tyrosine 216 coordinates shikimate. Glycine 239 provides a ligand contact to NADP(+).

The protein belongs to the shikimate dehydrogenase family. As to quaternary structure, homodimer.

It catalyses the reaction shikimate + NADP(+) = 3-dehydroshikimate + NADPH + H(+). It participates in metabolic intermediate biosynthesis; chorismate biosynthesis; chorismate from D-erythrose 4-phosphate and phosphoenolpyruvate: step 4/7. Functionally, involved in the biosynthesis of the chorismate, which leads to the biosynthesis of aromatic amino acids. Catalyzes the reversible NADPH linked reduction of 3-dehydroshikimate (DHSA) to yield shikimate (SA). The protein is Shikimate dehydrogenase (NADP(+)) of Haemophilus ducreyi (strain 35000HP / ATCC 700724).